The following is a 217-amino-acid chain: Putative thymidylate synthase (217 aa).

C139 is an active-site residue.

It belongs to the thymidylate synthase family. Archaeal-type ThyA subfamily. Monomer.

It is found in the cytoplasm. It participates in pyrimidine metabolism; dTTP biosynthesis. In terms of biological role, may catalyze the biosynthesis of dTMP using an unknown cosubstrate. This Methanosarcina barkeri (strain Fusaro / DSM 804) protein is Putative thymidylate synthase.